Consider the following 222-residue polypeptide: Myosin regulatory light chain 2 (222 aa).

A disordered region spans residues 1–65; it reads MADEKKKVKK…RGSRKSKRAG (65 aa). Ala-2 carries the N-acetylalanine modification. Positions 19–53 are enriched in low complexity; the sequence is TSETASEAASEAATPAPAATPAPAASATGSKRASG. Ser-66 and Ser-67 each carry phosphoserine. EF-hand domains are found at residues 75 to 110, 147 to 180, and 181 to 216; these read KQIA…VGKI, DEDE…FGDK, and FTMK…KGEE. Asp-88, Asp-90, Asp-92, and Asp-99 together coordinate Ca(2+).

In terms of assembly, myosin is a hexamer of 2 heavy chains and 4 light chains.

The protein is Myosin regulatory light chain 2 (Mlc2) of Drosophila melanogaster (Fruit fly).